The sequence spans 371 residues: Serpentine receptor class delta-1 (371 aa).

7 consecutive transmembrane segments (helical) span residues 31–51, 62–82, 109–129, 148–168, 209–229, 267–287, and 295–315; these read LSEVICGFGIVLNLLLIYVIF, AVLLFNFAIFDLLTCVASLLA, CFFCHCFVCHAMAHSQWILLI, MIVIVSLFYAMSAVIFLFYFW, IPSLIAIFYMTMPCVPIYFII, AIPIFWLVASGIFTLAEFGII, and ITFRLMDCIPSSSPLVAFIFI. Residues 344–371 are disordered; it reads EKFNQPPKQPTNPAQQSANNDAAKTEKV. Positions 354-365 are enriched in polar residues; it reads TNPAQQSANNDA.

It belongs to the nematode receptor-like protein srd family.

Its subcellular location is the membrane. The polypeptide is Serpentine receptor class delta-1 (srd-1) (Caenorhabditis elegans).